We begin with the raw amino-acid sequence, 232 residues long: Putative homeobox protein NANOG2 (232 aa).

The segment at 1–39 is disordered; sequence MDLPIQDSHDSSTSPKGKQPTTAEKSATKKEDKVPVKKQ. Over residues 11-25 the composition is skewed to polar residues; that stretch reads SSTSPKGKQPTTAEK. Over residues 26 to 35 the composition is skewed to basic and acidic residues; sequence SATKKEDKVP. 8 repeat units span residues 123-127, 128-132, 133-137, 143-147, 148-152, 153-157, 158-162, and 163-167. The 8 X repeats starting with a Trp in each unit stretch occupies residues 123-167; the sequence is WSNQTWNNSTWSNQTQNIQSWSNHSWNTQTWCTQSWNNQAWNSPF. A sufficient for transactivation activity region spans residues 123–167; the sequence is WSNQTWNNSTWSNQTQNIQSWSNHSWNTQTWCTQSWNNQAWNSPF. The segment at 168 to 232 is sufficient for strong transactivation activity; it reads YNCGEESLQS…YSMNMQPEDV (65 aa).

Belongs to the Nanog homeobox family.

The protein resides in the nucleus. In terms of biological role, probable transcriptional regulator. This Homo sapiens (Human) protein is Putative homeobox protein NANOG2 (NANOGP1).